The primary structure comprises 432 residues: Glutamate-1-semialdehyde 2,1-aminomutase (432 aa).

Residue K270 is modified to N6-(pyridoxal phosphate)lysine.

This sequence belongs to the class-III pyridoxal-phosphate-dependent aminotransferase family. HemL subfamily. In terms of assembly, homodimer. Requires pyridoxal 5'-phosphate as cofactor.

The protein resides in the cytoplasm. The catalysed reaction is (S)-4-amino-5-oxopentanoate = 5-aminolevulinate. It participates in porphyrin-containing compound metabolism; protoporphyrin-IX biosynthesis; 5-aminolevulinate from L-glutamyl-tRNA(Glu): step 2/2. In Acinetobacter baylyi (strain ATCC 33305 / BD413 / ADP1), this protein is Glutamate-1-semialdehyde 2,1-aminomutase.